The primary structure comprises 482 residues: MKGLFLRIITALALLFWAIDMVFPWQFLRHTEENHYTAIQARGSLYVGTINNQISYFINKDSERGFEYELAKAFADTLGVELEMKIFDNQEQLFDELNKHNIDLAAAHLLYHPKNAERFQIGPAYHSASWQLAYRKNENRPKNLGNVKKDIYISNNLALEETLKELQKQYPQLIWKRNQALTQEELLLQLAEGKIPYVIANSIDIAAIQQIKPELAIAFDITDEANVHWYLPNSPYRDLQTALLNFMNNAEETGLLDNLKEKYLGHISQFDYVDTRSYMNAIENILPQFSPLFEKYKGELDWRLLAAVAYQESHWNPDATSPTGVRGIMMLTKNTAQHMKISDRTDPEQSIKAGSEYLHWLISQLPESIEKEERIWFALVAYNIGLGHLIDARRLTQNLGGNPDNWLNVKKNLPLLAEKRYYSQLKYGYARGYEAYQYVENIRRYMNSIVNYHRVQENQTTNDNANNESAVKNLEEIKENED.

An N-terminal signal peptide occupies residues 1–18 (MKGLFLRIITALALLFWA). A non-LT domain region spans residues 19–267 (IDMVFPWQFL…NLKEKYLGHI (249 aa)). Positions 268-482 (SQFDYVDTRS…NLEEIKENED (215 aa)) are LT domain. Residue E312 is part of the active site. Positions 457 to 470 (ENQTTNDNANNESA) are enriched in polar residues. A disordered region spans residues 457–482 (ENQTTNDNANNESAVKNLEEIKENED). Over residues 473-482 (NLEEIKENED) the composition is skewed to basic and acidic residues.

This sequence in the N-terminal section; belongs to the bacterial solute-binding protein 3 family. It in the C-terminal section; belongs to the transglycosylase Slt family.

The protein localises to the cell outer membrane. The catalysed reaction is Exolytic cleavage of the (1-&gt;4)-beta-glycosidic linkage between N-acetylmuramic acid (MurNAc) and N-acetylglucosamine (GlcNAc) residues in peptidoglycan, from either the reducing or the non-reducing ends of the peptidoglycan chains, with concomitant formation of a 1,6-anhydrobond in the MurNAc residue.. In terms of biological role, murein-degrading enzyme that degrades murein glycan strands and insoluble, high-molecular weight murein sacculi, with the concomitant formation of a 1,6-anhydromuramoyl product. Lytic transglycosylases (LTs) play an integral role in the metabolism of the peptidoglycan (PG) sacculus. Their lytic action creates space within the PG sacculus to allow for its expansion as well as for the insertion of various structures such as secretion systems and flagella. This is Membrane-bound lytic murein transglycosylase F from Haemophilus influenzae (strain PittGG).